We begin with the raw amino-acid sequence, 58 residues long: Lantibiotic macedovicin (58 aa).

Positions 1–25 (MMNATENQIFVETVSDQELEMLIGG) are excised as a propeptide. Residues Thr33 and Thr35 each carry the 2,3-didehydrobutyrine modification. 2 consecutive cross-links (beta-methyllanthionine (Thr-Cys)) follow at residues 33–38 (TLTKDC) and 35–57 (TKDCPNVISSICAGTIITACKNC). Cysteines 46 and 54 form a disulfide.

Maturation of macedovicin involves the enzymatic dehydration of Thr-33 and Thr-35 into dehydrobutyrine residues, that can form a beta-methyllanthionine bond with Cys-38 and Cys-57, respectively. This is followed by membrane translocation and cleavage of the modified precursor.

It is found in the secreted. Its function is as follows. Lanthionine-containing peptide antibiotic (lantibiotic) active on Gram-positive bacteria. Macedovicin inhibits a broad spectrum of lactic acid bacteria, several food spoilage species (e.g. Clostridium spp.) and oral streptococci. The bactericidal activity of lantibiotics is based on depolarization of energized bacterial cytoplasmic membranes, initiated by the formation of aqueous transmembrane pores. The chain is Lantibiotic macedovicin from Streptococcus macedonicus (strain ACA-DC 198).